Here is a 661-residue protein sequence, read N- to C-terminus: Threonine--tRNA ligase (661 aa).

One can recognise a TGS domain in the interval 1–64; sequence MSHSVSLTFP…ADGKIEIVTR (64 aa). A catalytic region spans residues 245–547; it reads DHRRLGREMD…LLENYAGHMP (303 aa). Residues Cys341, His392, and His524 each contribute to the Zn(2+) site.

Belongs to the class-II aminoacyl-tRNA synthetase family. As to quaternary structure, homodimer. Requires Zn(2+) as cofactor.

The protein localises to the cytoplasm. The catalysed reaction is tRNA(Thr) + L-threonine + ATP = L-threonyl-tRNA(Thr) + AMP + diphosphate + H(+). Functionally, catalyzes the attachment of threonine to tRNA(Thr) in a two-step reaction: L-threonine is first activated by ATP to form Thr-AMP and then transferred to the acceptor end of tRNA(Thr). Also edits incorrectly charged L-seryl-tRNA(Thr). The chain is Threonine--tRNA ligase from Sinorhizobium fredii (strain NBRC 101917 / NGR234).